The following is a 284-amino-acid chain: MADTEPSPLFVFSTIAIIISTFVIFYFVQQSKKNTPVLKPDTFQKFPLIEKTRVSHNSSVYRFGLPKSTDRLGLPIGQHISIGATIGGKEVVRSYTPISTDDELGYFDLLIKTYENGNISKHVDSKKVGEYVEIRGPKGFFTYTPNMVKSFGMIAGGTGIAPMYQIITAILRNPADKTKISLIYANVTESDILLKSELDKWAEEHPDNFSVHYVLNEAPENWKGSVGFVTPEIIDSKLPKASDDSNLLLCGPPPMISAMKKAAVGLGFAKAKPVSKLGDQVFVF.

A helical membrane pass occupies residues 8 to 28 (PLFVFSTIAIIISTFVIFYFV). The FAD-binding FR-type domain occupies 41–144 (DTFQKFPLIE…RGPKGFFTYT (104 aa)). Residues 124-139 (DSKKVGEYVEIRGPKG) and 150-182 (SFGMIAGGTGIAPMYQIITAILRNPADKTKISL) contribute to the FAD site.

Belongs to the flavoprotein pyridine nucleotide cytochrome reductase family. In terms of assembly, monomer. Component of the 2-(3-amino-3-carboxypropyl)histidine synthase complex composed of DPH1, DPH2, DPH3 and a NADH-dependent reductase, predominantly CBR1. FAD is required as a cofactor.

The protein resides in the mitochondrion outer membrane. It catalyses the reaction 2 Fe(III)-[cytochrome b5] + NADH = 2 Fe(II)-[cytochrome b5] + NAD(+) + H(+). The catalysed reaction is 2 Fe(3+)-[Dph3] + NADH = 2 Fe(2+)-[Dph3] + NAD(+) + H(+). It functions in the pathway protein modification; peptidyl-diphthamide biosynthesis. Its function is as follows. NADH-dependent reductase for DPH3 and cytochrome b5. Required for the first step of diphthamide biosynthesis, a post-translational modification of histidine which occurs in elongation factor 2. DPH1 and DPH2 transfer a 3-amino-3-carboxypropyl (ACP) group from S-adenosyl-L-methionine (SAM) to a histidine residue, the reaction is assisted by a reduction system comprising DPH3 and a NADH-dependent reductase, predominantly CBR1. By reducing DPH3, also involved in the formation of the tRNA wobble base modification mcm5s 2U (5-methoxycarbonylmethyl-2-thiouridine), mediated by the elongator complex. The cytochrome b5/NADH cytochrome b5 reductase electron transfer system supports the catalytic activity of several sterol biosynthetic enzymes. The protein is NADH-cytochrome b5 reductase 1 (CBR1) of Scheffersomyces stipitis (strain ATCC 58785 / CBS 6054 / NBRC 10063 / NRRL Y-11545) (Yeast).